The chain runs to 376 residues: Heat-inducible transcription repressor HrcA (376 aa).

It belongs to the HrcA family.

In terms of biological role, negative regulator of class I heat shock genes (grpE-dnaK-dnaJ and groELS operons). Prevents heat-shock induction of these operons. This Nostoc punctiforme (strain ATCC 29133 / PCC 73102) protein is Heat-inducible transcription repressor HrcA.